The following is a 591-amino-acid chain: NADP-dependent malic enzyme (591 aa).

The span at 1-10 (MESTLKEMRD) shows a compositional bias: basic and acidic residues. Residues 1–26 (MESTLKEMRDGASVLDMDPKSTVGGG) are disordered. The active-site Proton donor is Y139. Residue R192 participates in NAD(+) binding. K210 serves as the catalytic Proton acceptor. A divalent metal cation contacts are provided by E282, D283, and D306. Position 306 (D306) interacts with NAD(+). 335 to 351 (LFLGAGEAGTGIAELIA) provides a ligand contact to NADP(+). N447 provides a ligand contact to NAD(+).

This sequence belongs to the malic enzymes family. In terms of assembly, homotetramer. Mg(2+) is required as a cofactor. It depends on Mn(2+) as a cofactor. In terms of tissue distribution, mRNA found twofold higher in leaves and stems than in roots.

Its subcellular location is the cytoplasm. It catalyses the reaction (S)-malate + NADP(+) = pyruvate + CO2 + NADPH. It carries out the reaction oxaloacetate + H(+) = pyruvate + CO2. In Populus trichocarpa (Western balsam poplar), this protein is NADP-dependent malic enzyme.